The sequence spans 194 residues: Dephospho-CoA kinase (194 aa).

Positions Ile3–Gly194 constitute a DPCK domain. Position 11–16 (Gly11–Thr16) interacts with ATP.

The protein belongs to the CoaE family.

The protein resides in the cytoplasm. The enzyme catalyses 3'-dephospho-CoA + ATP = ADP + CoA + H(+). It functions in the pathway cofactor biosynthesis; coenzyme A biosynthesis; CoA from (R)-pantothenate: step 5/5. In terms of biological role, catalyzes the phosphorylation of the 3'-hydroxyl group of dephosphocoenzyme A to form coenzyme A. The protein is Dephospho-CoA kinase of Rhizobium meliloti (strain 1021) (Ensifer meliloti).